A 604-amino-acid chain; its full sequence is Replication protein E1 (604 aa).

The Nuclear localization signal motif lies at 76–78; sequence KRK. 2 positions are modified to phosphoserine; by host: serine 81 and serine 89. The Nuclear export signal signature appears at 88–97; the sequence is LSPRLESISL. The segment at 144–307 is DNA-binding region; that stretch reads GSGAIDIDYL…TILGHQNAEA (164 aa). Residues 406 to 556 form the SF3 helicase domain; sequence VNFITFLAAF…FPMKPDNTPQ (151 aa). An ATP-binding site is contributed by 432–439; sequence GPPNSGKS. A Glycyl lysine isopeptide (Lys-Gly) (interchain with G-Cter in SUMO) cross-link involves residue lysine 513. The tract at residues 579-604 is disordered; it reads DQEEEGQHGESQRAFQCSARSANEHI. Polar residues predominate over residues 591–604; sequence RAFQCSARSANEHI.

The protein belongs to the papillomaviridae E1 protein family. As to quaternary structure, can form hexamers. Interacts with E2 protein; this interaction increases E1 DNA binding specificity. Interacts with host DNA polymerase subunit POLA2. Interacts with host single stranded DNA-binding protein RPA1. Interacts with host TOP1; this interaction stimulates the enzymatic activity of TOP1. Post-translationally, phosphorylated. In terms of processing, sumoylated.

The protein resides in the host nucleus. The enzyme catalyses Couples ATP hydrolysis with the unwinding of duplex DNA by translocating in the 3'-5' direction.. It carries out the reaction ATP + H2O = ADP + phosphate + H(+). Its function is as follows. ATP-dependent DNA 3'-5' helicase required for initiation of viral DNA replication. It forms a complex with the viral E2 protein. The E1-E2 complex binds to the replication origin which contains binding sites for both proteins. During the initial step, a dimer of E1 interacts with a dimer of protein E2 leading to a complex that binds the viral origin of replication with high specificity. Then, a second dimer of E1 displaces the E2 dimer in an ATP-dependent manner to form the E1 tetramer. Following this, two E1 monomers are added to each half of the site, which results in the formation of two E1 trimers on the viral ori. Subsequently, two hexamers will be created. The double hexamer acts as a bi-directional helicase machinery and unwinds the viral DNA and then recruits the host DNA polymerase to start replication. This is Replication protein E1 from Human papillomavirus 12.